We begin with the raw amino-acid sequence, 306 residues long: Oxygen-dependent coproporphyrinogen-III oxidase (306 aa).

Ser94 lines the substrate pocket. A divalent metal cation-binding residues include His98 and His108. His108 acts as the Proton donor in catalysis. Residue 110-112 participates in substrate binding; it reads NVR. Positions 147 and 177 each coordinate a divalent metal cation. The tract at residues 242-277 is important for dimerization; it reads YVEFNLVYDRGTLFGLQTGGRTESILMSMPPLVRWQ. 260 to 262 contacts substrate; sequence GGR.

Belongs to the aerobic coproporphyrinogen-III oxidase family. In terms of assembly, homodimer. A divalent metal cation serves as cofactor.

The protein resides in the cytoplasm. It catalyses the reaction coproporphyrinogen III + O2 + 2 H(+) = protoporphyrinogen IX + 2 CO2 + 2 H2O. Its pathway is porphyrin-containing compound metabolism; protoporphyrin-IX biosynthesis; protoporphyrinogen-IX from coproporphyrinogen-III (O2 route): step 1/1. Functionally, involved in the heme biosynthesis. Catalyzes the aerobic oxidative decarboxylation of propionate groups of rings A and B of coproporphyrinogen-III to yield the vinyl groups in protoporphyrinogen-IX. In Shewanella sediminis (strain HAW-EB3), this protein is Oxygen-dependent coproporphyrinogen-III oxidase.